Consider the following 538-residue polypeptide: Phosphoenolpyruvate carboxykinase (ATP) (538 aa).

Arg-64 contributes to the substrate binding site. Arg-152 is a binding site for ATP. The substrate site is built by Tyr-205 and Lys-211. Residues Lys-211, His-230, and 246–254 (GLSGTGKTT) contribute to the ATP site. Residues Lys-211 and His-230 each coordinate Mn(2+). Asp-267 provides a ligand contact to Mn(2+). ATP contacts are provided by residues Glu-295, Arg-331, Arg-344, 447 to 448 (RI), and Thr-453. Arg-331 contributes to the substrate binding site.

It belongs to the phosphoenolpyruvate carboxykinase (ATP) family. As to quaternary structure, monomer. The cofactor is Mn(2+).

The protein localises to the cytoplasm. It carries out the reaction oxaloacetate + ATP = phosphoenolpyruvate + ADP + CO2. It functions in the pathway carbohydrate biosynthesis; gluconeogenesis. Its function is as follows. Involved in gluconeogenesis. Catalyzes the conversion of oxaloacetate (OAA) to phosphoenolpyruvate (PEP) through direct phosphoryl transfer between the nucleoside triphosphate and OAA. This chain is Phosphoenolpyruvate carboxykinase (ATP), found in Actinobacillus succinogenes (strain ATCC 55618 / DSM 22257 / CCUG 43843 / 130Z).